The following is a 276-amino-acid chain: Sulfur carrier protein FdhD (276 aa).

C122 acts as the Cysteine persulfide intermediate in catalysis. 259–264 lines the Mo-bis(molybdopterin guanine dinucleotide) pocket; it reads FCKPGK.

Belongs to the FdhD family.

It is found in the cytoplasm. Its function is as follows. Required for formate dehydrogenase (FDH) activity. Acts as a sulfur carrier protein that transfers sulfur from IscS to the molybdenum cofactor prior to its insertion into FDH. In Photorhabdus laumondii subsp. laumondii (strain DSM 15139 / CIP 105565 / TT01) (Photorhabdus luminescens subsp. laumondii), this protein is Sulfur carrier protein FdhD.